The primary structure comprises 254 residues: Flavin-dependent thymidylate synthase (254 aa).

The 231-residue stretch at 7–237 (LRVQLIARTE…PAVFADFEIY (231 aa)) folds into the ThyX domain. FAD contacts are provided by residues Ser-71, 95-97 (RHR), and Gln-103. DUMP is bound by residues 92-95 (ELIR), 103-107 (QLSQR), and Arg-176. A ThyX motif motif is present at residues 95–105 (RHRHFSYSQLS). Residues 192–194 (NYR) and His-198 each bind FAD. Position 203 (Arg-203) interacts with dUMP. Residue Arg-203 is the Involved in ionization of N3 of dUMP, leading to its activation of the active site.

This sequence belongs to the thymidylate synthase ThyX family. As to quaternary structure, homotetramer. Requires FAD as cofactor.

It catalyses the reaction dUMP + (6R)-5,10-methylene-5,6,7,8-tetrahydrofolate + NADPH + H(+) = dTMP + (6S)-5,6,7,8-tetrahydrofolate + NADP(+). Its pathway is pyrimidine metabolism; dTTP biosynthesis. In terms of biological role, catalyzes the reductive methylation of 2'-deoxyuridine-5'-monophosphate (dUMP) to 2'-deoxythymidine-5'-monophosphate (dTMP) while utilizing 5,10-methylenetetrahydrofolate (mTHF) as the methyl donor, and NADPH and FADH(2) as the reductant. This chain is Flavin-dependent thymidylate synthase, found in Mycobacterium sp. (strain JLS).